The chain runs to 1962 residues: PIII-type proteinase (1962 aa).

A signal peptide spans 1–33 (MQRKKKGLSILLAGTVALGALAVLPVGEIQAKA). Residues 34-187 (AISQQTKGSS…VTLAKVYYPT (154 aa)) constitute a propeptide that is removed on maturation. The Peptidase S8 domain occupies 191–697 (ANSMANVQAV…AGLVDVKAAI (507 aa)). Catalysis depends on charge relay system residues aspartate 217, histidine 281, and serine 620. A disordered region spans residues 1796 to 1938 (GKGDGTTGTS…KTGETTERPA (143 aa)). Positions 1797–1812 (KGDGTTGTSDKGGGQG) are enriched in gly residues. Polar residues-rich tracts occupy residues 1856 to 1865 (RNGQLTSGTS) and 1890 to 1903 (SQPSSGGNIPTNPA). Positions 1927-1931 (LPKTG) match the LPXTG sorting signal motif. Threonine 1930 carries the post-translational modification Pentaglycyl murein peptidoglycan amidated threonine. The propeptide at 1931–1962 (GETTERPAFGFLGVIVVSLMGVLGLKRKQREE) is removed by sortase.

It belongs to the peptidase S8 family.

It localises to the secreted. Its subcellular location is the cell wall. It catalyses the reaction Endopeptidase activity with very broad specificity, although some subsite preference have been noted, e.g. large hydrophobic residues in the P1 and P4 positions, and Pro in the P2 position. Best known for its action on caseins, although it has been shown to hydrolyze hemoglobin and oxidized insulin B-chain.. Its function is as follows. Protease which breaks down milk proteins during the growth of the bacteria on milk. The chain is PIII-type proteinase (prtP) from Lactococcus lactis subsp. cremoris (strain SK11).